The sequence spans 334 residues: MKKVSRLTEADVTAESAFFMQRRQVLKALGITTAALSLPTAAHADVLSWFKGNDRPKAPAGAPLDFTRPAQYQAKLDLTPEDKVTGYNNFYEFGLDKADPAANAGSLKTNPWTLKIGGEVAKPLTLDHDDLTKKFPLEERIYRMRCVEAWSMVVPWIGFPLHKLLALVEPTSNAKYVAFKTLYAPDIMPGQKDRFIGGGLEYPYVEALRLDEAMHPLTMLTTGVYGKALPPQNGAPVRLTVPWKYGFKGIKSIVSITLTRERPPTTWNMAAPDEYGFYANVNPHVDHPRWSQASERVIGSGGVLDVKRQPTLLFNGYADEVASLYKGLDLRENF.

A signal peptide (tat-type signal) is located at residues 1–44 (MKKVSRLTEADVTAESAFFMQRRQVLKALGITTAALSLPTAAHA). Mo-molybdopterin is bound by residues Asn88, 91-92 (YE), Cys146, Thr181, Asn233, Arg238, and 249-251 (GIK).

It belongs to the MsrP family. In terms of assembly, heterodimer of a catalytic subunit (MsrP) and a heme-binding subunit (MsrQ). Mo-molybdopterin is required as a cofactor. In terms of processing, predicted to be exported by the Tat system. The position of the signal peptide cleavage has not been experimentally proven.

Its subcellular location is the periplasm. The enzyme catalyses L-methionyl-[protein] + a quinone + H2O = L-methionyl-(S)-S-oxide-[protein] + a quinol. It carries out the reaction L-methionyl-[protein] + a quinone + H2O = L-methionyl-(R)-S-oxide-[protein] + a quinol. In terms of biological role, part of the MsrPQ system that repairs oxidized periplasmic proteins containing methionine sulfoxide residues (Met-O), using respiratory chain electrons. Thus protects these proteins from oxidative-stress damage caused by reactive species of oxygen and chlorine generated by the host defense mechanisms. MsrPQ is essential for the maintenance of envelope integrity under bleach stress, rescuing a wide series of structurally unrelated periplasmic proteins from methionine oxidation. The catalytic subunit MsrP is non-stereospecific, being able to reduce both (R-) and (S-) diastereoisomers of methionine sulfoxide. This Cronobacter sakazakii (strain ATCC BAA-894) (Enterobacter sakazakii) protein is Protein-methionine-sulfoxide reductase catalytic subunit MsrP.